Reading from the N-terminus, the 149-residue chain is Cell division protein SepF (149 aa).

The disordered stretch occupies residues 12–57 (SNEEDDYYEEDGYEQSQQQEQQTTQQTSSQPRFVRQTTQSQTPAGL). A compositionally biased stretch (acidic residues) spans 13-24 (NEEDDYYEEDGY). The segment covering 25–41 (EQSQQQEQQTTQQTSSQ) has biased composition (low complexity). The span at 46-57 (RQTTQSQTPAGL) shows a compositional bias: polar residues.

Belongs to the SepF family. As to quaternary structure, homodimer. Interacts with FtsZ.

The protein resides in the cytoplasm. Cell division protein that is part of the divisome complex and is recruited early to the Z-ring. Probably stimulates Z-ring formation, perhaps through the cross-linking of FtsZ protofilaments. Its function overlaps with FtsA. The polypeptide is Cell division protein SepF (Leuconostoc mesenteroides subsp. mesenteroides (strain ATCC 8293 / DSM 20343 / BCRC 11652 / CCM 1803 / JCM 6124 / NCDO 523 / NBRC 100496 / NCIMB 8023 / NCTC 12954 / NRRL B-1118 / 37Y)).